The sequence spans 999 residues: MEPRAAAAGEPEPPAASSSFQARLWKNLQLGVGRSKGGGGGRAGGPERRTADTPSPSPPPPVGTGNAPARGSGAGSRWSGFKKRKQVLDRVFSSSQPNLCCSSPEPLEPGGAGRAEQGSTLRRRIREHLLPAVKGPAAASGAAGGTPPGGRSPDSAPSSSSASSSLSSSPQPPPRGDRARDEGARRQGPGAHLCHQKSSSLPGTACLEQLLEPPPPPAEPARSPAESRAPETGEEHGSSQKIINTAGTSNAEVPLADPGMYQLDITLRRGQSLAARDRGGTSDPYVKFKIGGKEVFRSKIIHKNLNPVWEEKACILVDHLREPLYIKVFDYDFGLQDDFMGSAFLDLTQLELNRPTDVTLTLKDPHYPDHDLGIILLSVILTPKEGESRDVTMLMRKSWKRSSKELSENEVVGSYFSVKSLFWRTCGRPALPVLGFCRAELQNPYCKNVQFQTQSLRLSDLHRKSHLWRGIVSITLIEGRDLKAMDSNGLSDPYVKFRLGHQKYKSKIMPKTLNPQWREQFDFHLYEERGGVIDITAWDKDAGKRDDFIGRCQVDLSALSREQTHKLELQLEEGEGHLVLLVTLTASATVSISDLSVNSLEDQKEREEILKRYSPLRIFHNLKDVGFLQVKVIRAEGLMAADVTGKSDPFCVVELNNDRLLTHTVYKNLNPEWNKVFTFNIKDIHSVLEVTVYDEDRDRSADFLGKVAIPLLSIQNGEQKAYVLKNKQLTGPTKGVIYLEIDVIFNAVKASLRTLIPKEQKYIEEENRLSKQLLLRNFIRMKRCVMVLVNAAYYVNSCFDWDSPPRSLAAFVLFLFVVWNFELYMIPLVLLLLLTWNYFLIISGKDNRQRDTVVEDMLEDEEEEDDKDDKDSEKKGFINKIYAIQEVCVSVQNILDEVASFGERIKNTFNWTVPFLSWLAIVALCVFTAILYCIPLRYIVLVWGINKFTKKLRSPYAIDNNELLDFLSRVPSDVQVVQYQELKPDPSHSPYKRKKNNLG.

The segment covering 1–19 has biased composition (low complexity); sequence MEPRAAAAGEPEPPAASSS. The disordered stretch occupies residues 1–241; the sequence is MEPRAAAAGE…TGEEHGSSQK (241 aa). A compositionally biased stretch (gly residues) spans 34–44; it reads RSKGGGGGRAG. The span at 65 to 79 shows a compositional bias: low complexity; sequence GNAPARGSGAGSRWS. A compositionally biased stretch (polar residues) spans 92 to 101; the sequence is FSSSQPNLCC. 2 stretches are compositionally biased toward low complexity: residues 131–141 and 149–169; these read PAVKGPAAASG and GGRSPDSAPSSSSASSSLSSS. Basic and acidic residues-rich tracts occupy residues 175–185 and 228–238; these read RGDRARDEGAR and RAPETGEEHGS. C2 domains are found at residues 242–360, 452–569, and 603–724; these read IINT…DVTL, QTQS…KLEL, and QKER…AYVL. Ca(2+)-binding residues include Asp277, Asp283, Asp330, Asp332, Asp338, Asp486, Asp492, Asp539, Asp541, Asp547, Asp642, Asp648, Asp694, Asp696, and Asp702. The next 2 membrane-spanning stretches (helical) occupy residues 811-831 and 914-934; these read FVLFLFVVWNFELYMIPLVLL and PFLSWLAIVALCVFTAILYCI.

Belongs to the MCTP family. Ca(2+) serves as cofactor.

The protein resides in the cytoplasmic vesicle. It localises to the secretory vesicle. It is found in the synaptic vesicle membrane. Its subcellular location is the recycling endosome. The protein localises to the endoplasmic reticulum membrane. Its function is as follows. Calcium sensor which is essential for the stabilization of normal baseline neurotransmitter release and for the induction and long-term maintenance of presynaptic homeostatic plasticity. This Homo sapiens (Human) protein is Multiple C2 and transmembrane domain-containing protein 1 (MCTP1).